The following is an 86-amino-acid chain: YcgL domain-containing protein Smlt4554 (86 aa).

Residues 1–85 form the YcgL domain; that stretch reads MHAYVYKSQL…SVASLMPRHY (85 aa).

This is YcgL domain-containing protein Smlt4554 from Stenotrophomonas maltophilia (strain K279a).